The primary structure comprises 568 residues: Urease subunit alpha (568 aa).

The Urease domain occupies 130–568 (GGIDTHIHFI…LPMAQRYFLF (439 aa)). Ni(2+)-binding residues include His135, His137, and Lys218. The residue at position 218 (Lys218) is an N6-carboxylysine. His220 serves as a coordination point for substrate. The Ni(2+) site is built by His247 and His273. His321 (proton donor) is an active-site residue. Asp361 provides a ligand contact to Ni(2+).

Belongs to the metallo-dependent hydrolases superfamily. Urease alpha subunit family. In terms of assembly, heterotrimer of UreA (gamma), UreB (beta) and UreC (alpha) subunits. Three heterotrimers associate to form the active enzyme. It depends on Ni cation as a cofactor. Carboxylation allows a single lysine to coordinate two nickel ions.

It localises to the cytoplasm. It catalyses the reaction urea + 2 H2O + H(+) = hydrogencarbonate + 2 NH4(+). It functions in the pathway nitrogen metabolism; urea degradation; CO(2) and NH(3) from urea (urease route): step 1/1. The polypeptide is Urease subunit alpha (Burkholderia mallei (strain NCTC 10247)).